The following is a 675-amino-acid chain: E3 ubiquitin-protein ligase COP1 (675 aa).

Residues 1–40 form a disordered region; it reads MEEISTDPVVPAVKPDPRTSSVGEGANRHENDDGGSGGSE. Cysteine 52, cysteine 55, cysteine 67, histidine 69, cysteine 72, cysteine 75, cysteine 86, and cysteine 89 together coordinate Zn(2+). Residues 52-90 form an RING-type zinc finger; the sequence is CPICMQIIKDAFLTACGHSFCYMCIITHLRNKSDCPCCS. The interval 67-177 is CLS (cytoplasmic localization signal); the sequence is CGHSFCYMCI…LDFLHCLRKQ (111 aa). Positions 120–177 are SNLS (subnuclear localization signal); the sequence is ASPLDQFREALQRGCDVSIKEVDNLLTLLAERKRKMEQEEAERNMQILLDFLHCLRKQ. Residues 134 to 201 adopt a coiled-coil conformation; it reads CDVSIKEVDN…IKEDINAVER (68 aa). The interval 261–290 is disordered; sequence EGKAQGSSHGLPKKDALSGSDSQSLNQSTV. Residues 279-290 are compositionally biased toward polar residues; the sequence is GSDSQSLNQSTV. The Bipartite nuclear localization signal motif lies at 294 to 317; it reads RKKRIHAQFNDLQECYLQKRRQLA. 7 WD repeats span residues 369–408, 418–458, 461–501, 503–543, 547–585, 588–627, and 642–675; these read HSAN…NEPA, STRS…SLME, EHEK…SVIN, DMKA…QPLH, GHKK…PVRT, GHTN…PVTS, and AGSY…VLAA. A binding of human TRIB1 COP1-binding-motif region spans residues 593 to 595; it reads KNF.

As to quaternary structure, homodimer. Interacts with HY5, HYH, BBX24/STO, BBX25/STH, CIP8, COP10, SPA1, SPA2, SPA3, SPA4 and UVR8 and phosphorylated PHYA. Light induces dissociation of the SPA1/COP1 complex. Interacts with HRT/RPP8 and triggers it to the 26s proteasome. Binds to CRY2; this competitive interaction prevents triggering to proteasome of other binding proteins. Binds to SHW1 in the nucleus. Bonds to CIP7. Interacts with CSU2. Binds to CIP1. Interacts directly with DHU1. Associates to UNE10/PIF8. Binds directly to PCH1 and PCHL. Autoubiquitinated.

The protein resides in the nucleus. It localises to the cytoplasm. The catalysed reaction is S-ubiquitinyl-[E2 ubiquitin-conjugating enzyme]-L-cysteine + [acceptor protein]-L-lysine = [E2 ubiquitin-conjugating enzyme]-L-cysteine + N(6)-ubiquitinyl-[acceptor protein]-L-lysine.. The protein operates within protein modification; protein ubiquitination. E3 ubiquitin-protein ligase that acts as a repressor of photomorphogenesis and as an activator of etiolation in darkness. E3 ubiquitin ligases accept ubiquitin from an E2 ubiquitin-conjugating enzyme in the form of a thioester and then directly transfers the ubiquitin to targeted substrates. Represses photomorphogenesis in darkness by mediating ubiquitination and subsequent proteasomal degradation of light-induced transcription factors such as HY5, HYH and LAF1. Down-regulates MYB21, probably via ubiquitination process. Light stimuli abrogate the repression of photomorphogenesis, possibly due to its localization to the cytoplasm. Could play a role in switching between skotomorphogenetic and photomorphogenetic pathways. Mediates the ubiquitination-dependent degradation of HY5 in the darkness during seedling development (e.g. hypocotyl growth). Represses CIP7 in darkness. Triggers ubiquitination and subsequent protein degradation of UNE10/PIF8, PCH1 and PCHL in the dark. The protein is E3 ubiquitin-protein ligase COP1 of Arabidopsis thaliana (Mouse-ear cress).